The sequence spans 429 residues: 46 kDa membrane protein (429 aa).

The next 9 helical transmembrane spans lie at 26 to 46 (AALT…EDVF), 51 to 71 (TGID…VSVL), 99 to 119 (LVLV…VLLI), 173 to 193 (FLIH…ALLP), 224 to 244 (LLIK…AHPV), 279 to 299 (TLLF…TDVV), 315 to 335 (LLTV…IDNI), 360 to 380 (ILWW…AVGA), and 407 to 427 (IAVT…RYLV).

The protein belongs to the CitM (TC 2.A.11) transporter family.

The protein resides in the cell membrane. The sequence is that of 46 kDa membrane protein (ag45) from Mycobacterium leprae (strain TN).